A 717-amino-acid chain; its full sequence is Choline transporter-like protein 5 (717 aa).

The segment at 1–24 (MNDTEKPADTASEEEDFGDPRTYD) is disordered. The Cytoplasmic portion of the chain corresponds to 1-38 (MNDTEKPADTASEEEDFGDPRTYDPDFKGPVSNRSCTD). Residues 39 to 59 (VLCCMIFLLCIVGYIVLGLVA) traverse the membrane as a helical segment. The Extracellular segment spans residues 60–242 (WVHGDPRRAA…KVFEDYATTW (183 aa)). Residues Asn-88 and Asn-190 are each glycosylated (N-linked (GlcNAc...) asparagine). Residues 243–263 (YWILIGLMIAMVLSWIFLILL) form a helical membrane-spanning segment. At 264–265 (RF) the chain is on the cytoplasmic side. The helical transmembrane segment at 266–286 (IAGCLFWVFMIGVIGIIGYGI) threads the bilayer. At 287 to 325 (WHCYQQYTNLQEHPRSVLTVYDIGIQTNISMYFELQQTW) the chain is on the extracellular side. Asn-314 carries an N-linked (GlcNAc...) asparagine glycan. A helical membrane pass occupies residues 326–346 (FTLMIILCIIEVIVILMLIFL). Residues 347–351 (RNRIR) lie on the Cytoplasmic side of the membrane. Residues 352-372 (VAIILLKEGSKAIGYVPSTLV) traverse the membrane as a helical segment. The Extracellular segment spans residues 373–374 (YP). Residues 375-395 (ALTFILLSICICYWVVTAVFL) traverse the membrane as a helical segment. The Cytoplasmic portion of the chain corresponds to 396 to 460 (ATSGVPVYKV…QYIPTFHVYN (65 aa)). Residues 461–481 (LFVFLWLINFVIALGQCALAG) traverse the membrane as a helical segment. The Extracellular portion of the chain corresponds to 482 to 515 (AFATYYWAMKKPDDIPRYPLFTAFGRAIRYHTGS). The chain crosses the membrane as a helical span at residues 516 to 536 (LAFGSLIIALIQMFKIVLEYL). At 537–610 (NHRLKRTENT…KVAVTDEVTY (74 aa)) the chain is on the cytoplasmic side. Residues 611–631 (FVLFLGKILVAGSIGVLAFLF) form a helical membrane-spanning segment. Over 632-649 (FTQRLPVIAQGPASLNYY) the chain is Extracellular. The chain crosses the membrane as a helical span at residues 650 to 670 (WVPLLTVILGSYLIAHGFFSV). Residues 671–717 (YAMCVETIFICFLEDLERNDGSTARPYYVSQPLLKIFQEENLQTKQQ) are Cytoplasmic-facing.

This sequence belongs to the CTL (choline transporter-like) family.

The protein localises to the cell membrane. It catalyses the reaction choline(out) + n H(+)(in) = choline(in) + n H(+)(out). Choline/H+ antiporter. This Macaca fascicularis (Crab-eating macaque) protein is Choline transporter-like protein 5 (SLC44A5).